Here is a 58-residue protein sequence, read N- to C-terminus: Photosystem II reaction center protein K (58 aa).

A propeptide spanning residues 1–21 (MLVISNVYPSNLFTLINPFFA) is cleaved from the precursor. The helical transmembrane segment at 29–49 (IFDPIVDVMPIIPVFFFLLAF) threads the bilayer.

The protein belongs to the PsbK family. In terms of assembly, PSII is composed of 1 copy each of membrane proteins PsbA, PsbB, PsbC, PsbD, PsbE, PsbF, PsbH, PsbI, PsbJ, PsbK, PsbL, PsbM, PsbT, PsbX, PsbY, PsbZ, Psb30/Ycf12, at least 3 peripheral proteins of the oxygen-evolving complex and a large number of cofactors. It forms dimeric complexes.

It localises to the plastid. It is found in the chloroplast thylakoid membrane. In terms of biological role, one of the components of the core complex of photosystem II (PSII). PSII is a light-driven water:plastoquinone oxidoreductase that uses light energy to abstract electrons from H(2)O, generating O(2) and a proton gradient subsequently used for ATP formation. It consists of a core antenna complex that captures photons, and an electron transfer chain that converts photonic excitation into a charge separation. The protein is Photosystem II reaction center protein K of Psilotum nudum (Whisk fern).